Reading from the N-terminus, the 115-residue chain is NAD(P)H-quinone oxidoreductase subunit M (115 aa).

It belongs to the complex I NdhM subunit family. As to quaternary structure, NDH-1 can be composed of about 15 different subunits; different subcomplexes with different compositions have been identified which probably have different functions.

The protein resides in the cellular thylakoid membrane. The catalysed reaction is a plastoquinone + NADH + (n+1) H(+)(in) = a plastoquinol + NAD(+) + n H(+)(out). It carries out the reaction a plastoquinone + NADPH + (n+1) H(+)(in) = a plastoquinol + NADP(+) + n H(+)(out). In terms of biological role, NDH-1 shuttles electrons from an unknown electron donor, via FMN and iron-sulfur (Fe-S) centers, to quinones in the respiratory and/or the photosynthetic chain. The immediate electron acceptor for the enzyme in this species is believed to be plastoquinone. Couples the redox reaction to proton translocation, and thus conserves the redox energy in a proton gradient. Cyanobacterial NDH-1 also plays a role in inorganic carbon-concentration. The protein is NAD(P)H-quinone oxidoreductase subunit M of Synechococcus sp. (strain WH7803).